The primary structure comprises 747 residues: AMP deaminase 1 (747 aa).

Threonine 81 carries the post-translational modification Phosphothreonine. Serine 85 carries the post-translational modification Phosphoserine. A Phosphotyrosine modification is found at tyrosine 216. 2 residues coordinate Zn(2+): histidine 303 and histidine 305. Substrate contacts are provided by residues histidine 305 and 374–379 (KFNDKY). A Phosphoserine modification is found at serine 441. Histidine 572 provides a ligand contact to Zn(2+). Glutamate 575 is a binding site for substrate. Histidine 594 (proton acceptor) is an active-site residue. Aspartate 649 is a binding site for Zn(2+). Position 650-653 (650-653 (DPMQ)) interacts with substrate.

This sequence belongs to the metallo-dependent hydrolases superfamily. Adenosine and AMP deaminases family. As to quaternary structure, homotetramer. Zn(2+) is required as a cofactor.

It carries out the reaction AMP + H2O + H(+) = IMP + NH4(+). The protein operates within purine metabolism; IMP biosynthesis via salvage pathway; IMP from AMP: step 1/1. AMP deaminase plays a critical role in energy metabolism. The polypeptide is AMP deaminase 1 (Rattus norvegicus (Rat)).